A 435-amino-acid chain; its full sequence is Cytochrome c biogenesis protein CcsB (435 aa).

Transmembrane regions (helical) follow at residues 14 to 34 (LRLAILLLLLIAGASALGTIL), 72 to 92 (SVWFLSLLAWLGLALILCSWR), and 162 to 182 (VGPLLVHTGLVLLLIGAAWGA).

This sequence belongs to the Ccs1/CcsB family. As to quaternary structure, may interact with CcsA.

It is found in the cellular thylakoid membrane. Its function is as follows. Required during biogenesis of c-type cytochromes (cytochrome c6 and cytochrome f) at the step of heme attachment. This is Cytochrome c biogenesis protein CcsB from Synechococcus sp. (strain CC9311).